Consider the following 436-residue polypeptide: Gustatory receptor for sugar taste 61a (436 aa).

Residues 1–78 (MSRTSDDIRK…PQDVKFKVRS (78 aa)) are Cytoplasmic-facing. Residues 79-99 (IGLAVTGLFLLLGGMKTLVGA) form a helical membrane-spanning segment. The Extracellular segment spans residues 100 to 111 (NILFTEGLNAKN). The chain crosses the membrane as a helical span at residues 112-132 (IVGLVFLIVGMVNWLNFVGFA). Residues 133–164 (RSWSHIMLPWSSVDILMLFPPYKRGKRSLRSK) are Cytoplasmic-facing. The helical transmembrane segment at 165–185 (VNVLALSVVVLAVGDHMLYYA) threads the bilayer. At 186-214 (SGYCSYSMHILQCHTNHSRITFGLYLEKE) the chain is on the extracellular side. N-linked (GlcNAc...) asparagine glycosylation is present at Asn201. A helical transmembrane segment spans residues 215-235 (FSDIMFIMPFNIFSMCYGFWL). Residues 236–237 (NG) are Cytoplasmic-facing. A helical membrane pass occupies residues 238–258 (AFTFLWNFMDIFIVMTSIGLA). Topologically, residues 259–304 (QRFQQFAARVGALEGRHVPEALWYDIRRDHIRLCELASLVEASMSN) are extracellular. A helical transmembrane segment spans residues 305 to 325 (IVFVSCANNVYVICNQALAIF). Residues 326–334 (TKLRHPINY) lie on the Cytoplasmic side of the membrane. The helical transmembrane segment at 335–355 (VYFWYSLIFLLARTSLVFMTA) threads the bilayer. Over 356–436 (SKIHDASLLP…AKSHKGLRCA (81 aa)) the chain is Extracellular.

Belongs to the insect chemoreceptor superfamily. Gustatory receptor (GR) family. Gr5a subfamily. As to expression, expressed in sweet sensing neurons of classical chemosensory sensilla, but also in two supersensitive neurons of atypical taste sensilla.

It localises to the cell membrane. In terms of biological role, one of the few identified sugar gustatory receptors identified so far with glucose being its primary ligand and which mediates acceptance behavior. The protein is Gustatory receptor for sugar taste 61a (Gr61a) of Drosophila melanogaster (Fruit fly).